A 1009-amino-acid chain; its full sequence is Glutamate receptor ionotropic, delta-1 (1009 aa).

Residues 1–20 (MEALTLWLLPWICQCVTVRA) form the signal peptide. Positions 21–436 (DSIIHIGAIF…ERPMGSRLQG (416 aa)) are interaction with CBLN1. Residues 21–562 (DSIIHIGAIF…SIFSLFAPFD (542 aa)) are Extracellular-facing. Disulfide bonds link Cys80-Cys351, Cys96-Cys128, and Cys294-Cys306. N-linked (GlcNAc...) asparagine glycosylation is found at Asn131 and Asn200. Residues Asn422 and Asn498 are each glycosylated (N-linked (GlcNAc...) asparagine). Ca(2+) is bound by residues Glu527, Val530, and Asp531. The chain crosses the membrane as a helical span at residues 563 to 583 (FAVWACIAAAIPVVGVLIFVL). Residues 584–637 (NRIQAVRSQSATQPRPSASATLHSAIWIVYGAFVQQGGESSVNSVAMRIVMGSW) lie on the Cytoplasmic side of the membrane. The helical transmembrane segment at 638–658 (WLFTLIVCSSYTANLAAFLTV) threads the bilayer. The Extracellular segment spans residues 659-830 (SRMDNPIRTF…TEGKSLKLHS (172 aa)). Residues Asp753, Asp755, and Ser757 each coordinate Ca(2+). A helical membrane pass occupies residues 831 to 851 (FAGVFCILAIGLLLACLVAAL). Residues 852 to 1009 (ELWWNSNRCH…ALDTSHGTSI (158 aa)) lie on the Cytoplasmic side of the membrane. The segment covering 931-942 (LPEQSSHGTSRT) has biased composition (polar residues). The segment at 931-960 (LPEQSSHGTSRTLSSGPSSNLPLPLSSSAT) is disordered. Positions 943-958 (LSSGPSSNLPLPLSSS) are enriched in low complexity.

This sequence belongs to the glutamate-gated ion channel (TC 1.A.10.1) family. GRID1 subfamily. As to quaternary structure, homodimer. Interacts (via extracellular N-terminal domain) with CBLN1 (via C1q domain), and more weakly with CBLN2; the interactions mediate the trans-synaptic adhesion complexes also with neurexins and are required for ligand-gated cation channel activity. Equally in forebrain and cerebellum.

Its subcellular location is the postsynaptic cell membrane. It catalyses the reaction Ca(2+)(in) = Ca(2+)(out). It carries out the reaction Na(+)(in) = Na(+)(out). Its function is as follows. Member of the ionotropic glutamate receptor family, which plays a crucial role in synaptic organization and signal transduction in the central nervous system. Although it shares structural features with ionotropic glutamate receptors, does not bind glutamate as a primary ligand. Instead, forms trans-synaptic adhesion complexes with presynaptic neurexins and cerebellins, regulating NMDA and AMPA receptor activity and influencing synaptic plasticity through signal transduction. In the presence of NRX1B-CBLN1, forms cation-selective channels that are proposed to be gated by glycine and D-serine. However, recent research disputes this ligand-gated cation channel activity. Cation-selective ion channel can be triggered by GRM1 in dopaminergic neurons. Also acts as a receptor for GABA, modulating inhibitory synaptic plasticity through non-ionotropic mechanisms. The protein is Glutamate receptor ionotropic, delta-1 (Grid1) of Mus musculus (Mouse).